The sequence spans 98 residues: uncharacterized protein (98 aa).

It belongs to the HesB/IscA family.

This is an uncharacterized protein from Staphylococcus epidermidis (strain ATCC 35984 / DSM 28319 / BCRC 17069 / CCUG 31568 / BM 3577 / RP62A).